The sequence spans 962 residues: Leucine--tRNA ligase (962 aa).

The short motif at 40–51 (PYPSGAGLHVGH) is the 'HIGH' region element. Residues 548–570 (SRKLSGQHDEPNSNVTPSAVEGS) are disordered. A 'KMSKS' region motif is present at residues 737–741 (KMSKS). Lysine 740 is a binding site for ATP.

The protein belongs to the class-I aminoacyl-tRNA synthetase family.

It is found in the cytoplasm. The catalysed reaction is tRNA(Leu) + L-leucine + ATP = L-leucyl-tRNA(Leu) + AMP + diphosphate. This Christiangramia forsetii (strain DSM 17595 / CGMCC 1.15422 / KT0803) (Gramella forsetii) protein is Leucine--tRNA ligase.